The following is a 55-amino-acid chain: ATP synthase protein 8 (55 aa).

A helical membrane pass occupies residues 4–24; that stretch reads LNPNPWFTILIFTWAVFLTIL.

Belongs to the ATPase protein 8 family. In terms of assembly, F-type ATPases have 2 components, CF(1) - the catalytic core - and CF(0) - the membrane proton channel.

It localises to the mitochondrion membrane. Functionally, mitochondrial membrane ATP synthase (F(1)F(0) ATP synthase or Complex V) produces ATP from ADP in the presence of a proton gradient across the membrane which is generated by electron transport complexes of the respiratory chain. F-type ATPases consist of two structural domains, F(1) - containing the extramembraneous catalytic core and F(0) - containing the membrane proton channel, linked together by a central stalk and a peripheral stalk. During catalysis, ATP synthesis in the catalytic domain of F(1) is coupled via a rotary mechanism of the central stalk subunits to proton translocation. Part of the complex F(0) domain. Minor subunit located with subunit a in the membrane. The chain is ATP synthase protein 8 (mt-atp8) from Polypterus ornatipinnis (Ornate bichir).